The primary structure comprises 252 residues: Small ribosomal subunit protein eS4 (252 aa).

The region spanning 43 to 105 (FPLLIIVRDI…TGETYRVIPV (63 aa)) is the S4 RNA-binding domain.

The protein belongs to the eukaryotic ribosomal protein eS4 family.

This is Small ribosomal subunit protein eS4 from Staphylothermus marinus (strain ATCC 43588 / DSM 3639 / JCM 9404 / F1).